Consider the following 362-residue polypeptide: Peptide chain release factor 1 (362 aa).

Gln237 carries the N5-methylglutamine modification.

The protein belongs to the prokaryotic/mitochondrial release factor family. In terms of processing, methylated by PrmC. Methylation increases the termination efficiency of RF1.

The protein localises to the cytoplasm. Its function is as follows. Peptide chain release factor 1 directs the termination of translation in response to the peptide chain termination codons UAG and UAA. The sequence is that of Peptide chain release factor 1 from Aliivibrio salmonicida (strain LFI1238) (Vibrio salmonicida (strain LFI1238)).